Here is a 79-residue protein sequence, read N- to C-terminus: ATP synthase subunit c (79 aa).

The next 2 membrane-spanning stretches (helical) occupy residues 11–31 and 53–73; these read MAAA…IGIL and FFIV…LGLY.

Belongs to the ATPase C chain family. F-type ATPases have 2 components, F(1) - the catalytic core - and F(0) - the membrane proton channel. F(1) has five subunits: alpha(3), beta(3), gamma(1), delta(1), epsilon(1). F(0) has three main subunits: a(1), b(2) and c(10-14). The alpha and beta chains form an alternating ring which encloses part of the gamma chain. F(1) is attached to F(0) by a central stalk formed by the gamma and epsilon chains, while a peripheral stalk is formed by the delta and b chains.

Its subcellular location is the cell inner membrane. Its function is as follows. F(1)F(0) ATP synthase produces ATP from ADP in the presence of a proton or sodium gradient. F-type ATPases consist of two structural domains, F(1) containing the extramembraneous catalytic core and F(0) containing the membrane proton channel, linked together by a central stalk and a peripheral stalk. During catalysis, ATP synthesis in the catalytic domain of F(1) is coupled via a rotary mechanism of the central stalk subunits to proton translocation. Key component of the F(0) channel; it plays a direct role in translocation across the membrane. A homomeric c-ring of between 10-14 subunits forms the central stalk rotor element with the F(1) delta and epsilon subunits. In Proteus mirabilis (strain HI4320), this protein is ATP synthase subunit c.